Here is a 475-residue protein sequence, read N- to C-terminus: Ornithine aminotransferase, mitochondrial (475 aa).

Residues 1–16 constitute a mitochondrion transit peptide; the sequence is MAATTRRLLYYVSKRF. The interval 23 to 43 is disordered; the sequence is RSYGGLPQSNSKSPPSSSQRL. A compositionally biased stretch (low complexity) spans 29–41; that stretch reads PQSNSKSPPSSSQ. Pyridoxal 5'-phosphate-binding positions include 142–143 and phenylalanine 177; that span reads GA. Arginine 180 contributes to the L-ornithine binding site. 265–268 is a binding site for pyridoxal 5'-phosphate; the sequence is DEVQ. At lysine 294 the chain carries N6-(pyridoxal phosphate)lysine. Serine 323 serves as a coordination point for L-ornithine. Threonine 324 is a binding site for pyridoxal 5'-phosphate.

It belongs to the class-III pyridoxal-phosphate-dependent aminotransferase family. Homotetramer. It depends on pyridoxal 5'-phosphate as a cofactor.

It is found in the mitochondrion matrix. It catalyses the reaction a 2-oxocarboxylate + L-ornithine = L-glutamate 5-semialdehyde + an L-alpha-amino acid. It functions in the pathway amino-acid biosynthesis; L-proline biosynthesis; L-glutamate 5-semialdehyde from L-ornithine: step 1/1. Functionally, mediates degradation of arginine for nitrogen recycling. Plays a role in non-host disease resistance by regulating pyrroline-5-carboxylate metabolism-induced hypersensitive response. The sequence is that of Ornithine aminotransferase, mitochondrial from Arabidopsis thaliana (Mouse-ear cress).